A 425-amino-acid chain; its full sequence is MSTIIDIHAREILDSRGNPTVEVDVVLEDGTMGRAAVPSGASTGAYEAVEKRDGDKSRYMGKGVLEAVAAVNGEIADELVGFDATEQVSIDRAMIELDGTENKGRLGANAILGVSMAVAKAAADFTTQPLYRYVGGAAARILPVPMMNIINGGEHADNPIDIQEFMIMPVAAENIRDAVRMGSEVFHTLKKELSAAGLSTGIGDEGGFAPNIASSREALDFILKSIEKAGYKPGEEIYLALDCAATEYYKDGKYVLSGEGKTLTSEENAAYLAALVNDYPIISIEDGMSEDDWDGWKALTDQIGDKVQLVGDDLFVTNPVRLAEGIERGCANSMLVKVNQIGSLTETLQAVDMAHRARYTNVMSHRSGETEDATIADLAVATNCGQIKTGSLARSDRLAKYNQLIRIEETLGEIAEYAGRSILKG.

Gln163 provides a ligand contact to (2R)-2-phosphoglycerate. Catalysis depends on Glu205, which acts as the Proton donor. Mg(2+) is bound by residues Asp242, Glu285, and Asp312. 4 residues coordinate (2R)-2-phosphoglycerate: Lys337, Arg366, Ser367, and Lys388. Residue Lys337 is the Proton acceptor of the active site.

Belongs to the enolase family. Mg(2+) is required as a cofactor.

The protein localises to the cytoplasm. The protein resides in the secreted. It is found in the cell surface. It catalyses the reaction (2R)-2-phosphoglycerate = phosphoenolpyruvate + H2O. It functions in the pathway carbohydrate degradation; glycolysis; pyruvate from D-glyceraldehyde 3-phosphate: step 4/5. In terms of biological role, catalyzes the reversible conversion of 2-phosphoglycerate (2-PG) into phosphoenolpyruvate (PEP). It is essential for the degradation of carbohydrates via glycolysis. The sequence is that of Enolase from Ruegeria sp. (strain TM1040) (Silicibacter sp.).